The following is a 199-amino-acid chain: NAD(P)H dehydrogenase (quinone) (199 aa).

Residues 4–190 (VLVLYYSAYG…AGARYQGRVI (187 aa)) form the Flavodoxin-like domain. Residues 10-15 (SAYGHI) and 78-80 (TRF) each bind FMN. Y12 is an NAD(+) binding site. A substrate-binding site is contributed by W98. FMN contacts are provided by residues 113 to 119 (STATQHG) and H134.

The protein belongs to the WrbA family. Requires FMN as cofactor.

It carries out the reaction a quinone + NADH + H(+) = a quinol + NAD(+). It catalyses the reaction a quinone + NADPH + H(+) = a quinol + NADP(+). The sequence is that of NAD(P)H dehydrogenase (quinone) from Bradyrhizobium sp. (strain ORS 278).